Reading from the N-terminus, the 345-residue chain is MSVTGGKMAPSLTQEILSHLGLASKTAAWGTLGTLRTFLNFSVDKDAQRLLRAITGQGVDRSAIVDVLTNRSREQRQLISRNFQERTQQDLMKSLQAALSGNLERIVMALLQPTAQFDAQELRTALKASDSAVDVAIEILATRTPPQLQECLAVYKHNFQVEAVDDITSETSGILQDLLLALAKGGRDSYSGIIDYNLAEQDVQALQRAEGPSREETWVPVFTQRNPEHLIRVFDQYQRSTGQELEEAVQNRFHGDAQVALLGLASVIKNTPLYFADKLHQALQETEPNYQVLIRILISRCETDLLSIRAEFRKKFGKSLYSSLQDAVKGDCQSALLALCRAEDM.

4 Annexin repeats span residues 41-112, 113-184, 197-266, and 270-341; these read FSVD…ALLQ, PTAQ…ALAK, NLAE…GLAS, and NTPL…ALCR.

It belongs to the annexin family. In terms of assembly, homodimer. Expressed in the stratified squamous skin epithelium, but not in epithelia of other types (at protein level).

In terms of biological role, low affinity receptor for acetylcholine known to be targeted by disease-causing pemphigus vulgaris antibodies in keratinocytes. This is Annexin A9 (ANXA9) from Homo sapiens (Human).